The following is a 157-amino-acid chain: Phosphopantetheine adenylyltransferase (157 aa).

A substrate-binding site is contributed by threonine 10. Residues 10-11 (TF) and histidine 18 each bind ATP. Residues lysine 42, leucine 74, and arginine 88 each contribute to the substrate site. ATP-binding positions include 89–91 (GLR), glutamate 99, and 124–130 (NAFISSS).

The protein belongs to the bacterial CoaD family. As to quaternary structure, homohexamer. Requires Mg(2+) as cofactor.

It localises to the cytoplasm. The catalysed reaction is (R)-4'-phosphopantetheine + ATP + H(+) = 3'-dephospho-CoA + diphosphate. Its pathway is cofactor biosynthesis; coenzyme A biosynthesis; CoA from (R)-pantothenate: step 4/5. Its activity is regulated as follows. Tightly binds to CoA, which is presumably a feedback inhibitor. Potently inhibited by D-amethopterin, which simultaneously occupies the 4'-phosphopantetheine- and ATP-binding sites; following treatment with D-amethopterin, H.pylori exhibits morphological characteristics associated with cell death, showing that D-amethopterin displays antimicrobial activity. Its function is as follows. Reversibly transfers an adenylyl group from ATP to 4'-phosphopantetheine, yielding dephospho-CoA (dPCoA) and pyrophosphate. The polypeptide is Phosphopantetheine adenylyltransferase (Helicobacter pylori (strain ATCC 700392 / 26695) (Campylobacter pylori)).